The primary structure comprises 257 residues: Ribosomal RNA small subunit methyltransferase J (257 aa).

Residues 107-108, 123-124, and D177 each bind S-adenosyl-L-methionine; these read RD and ER.

The protein belongs to the methyltransferase superfamily. RsmJ family.

It localises to the cytoplasm. It carries out the reaction guanosine(1516) in 16S rRNA + S-adenosyl-L-methionine = N(2)-methylguanosine(1516) in 16S rRNA + S-adenosyl-L-homocysteine + H(+). Specifically methylates the guanosine in position 1516 of 16S rRNA. The protein is Ribosomal RNA small subunit methyltransferase J of Haemophilus influenzae (strain 86-028NP).